The chain runs to 401 residues: Nodal homolog 3-A (401 aa).

The signal sequence occupies residues M1–A18. Positions M19–R274 are excised as a propeptide. N-linked (GlcNAc...) asparagine glycosylation is found at N168, N337, and N344. Disulfide bonds link C299–C365 and C328–C396.

It belongs to the TGF-beta family. In terms of assembly, monomer. The propeptide region interacts with bmp4 in a non-covalent manner. In terms of tissue distribution, expressed in the dorsal marginal region of late blastula, becoming restricted to the Spemann organizer at the early gastrula stage.

The protein resides in the secreted. Its function is as follows. Exhibits mesoderm-dorsalizing activity and neural-inducing activity, but lacks mesoderm-inducing activity. Regulates the expression of specific mesodermal and neural genes. Induces convergent extension movements at the embryonic midline by activating the fgf signaling pathway to induce t/bra expression in the organizer region. Acts with wnt11 to induce Spemann organizer cells and induce axis formation. The unprocessed protein antagonizes bmp-signaling. In Xenopus tropicalis (Western clawed frog), this protein is Nodal homolog 3-A.